Reading from the N-terminus, the 552-residue chain is Urocanate hydratase (552 aa).

NAD(+) contacts are provided by residues Gly49–Gly50, Gln127, Gly173–Gly175, Asp193, Asn239–Ala240, Gln260–His264, Tyr270–Ile271, and Tyr319. The active site involves Cys407. An NAD(+)-binding site is contributed by Gly489.

The protein belongs to the urocanase family. The cofactor is NAD(+).

The protein localises to the cytoplasm. The enzyme catalyses 4-imidazolone-5-propanoate = trans-urocanate + H2O. It participates in amino-acid degradation; L-histidine degradation into L-glutamate; N-formimidoyl-L-glutamate from L-histidine: step 2/3. Functionally, catalyzes the conversion of urocanate to 4-imidazolone-5-propionate. The sequence is that of Urocanate hydratase from Bacillus cereus (strain B4264).